A 163-amino-acid chain; its full sequence is 3-isopropylmalate dehydratase small subunit 2 (163 aa).

It belongs to the LeuD family. LeuD type 2 subfamily. Heterodimer of LeuC and LeuD.

The catalysed reaction is (2R,3S)-3-isopropylmalate = (2S)-2-isopropylmalate. The protein operates within amino-acid biosynthesis; L-leucine biosynthesis; L-leucine from 3-methyl-2-oxobutanoate: step 2/4. Its function is as follows. Catalyzes the isomerization between 2-isopropylmalate and 3-isopropylmalate, via the formation of 2-isopropylmaleate. This chain is 3-isopropylmalate dehydratase small subunit 2 (leuD2), found in Pyrococcus abyssi (strain GE5 / Orsay).